Here is a 217-residue protein sequence, read N- to C-terminus: N-(5'-phosphoribosyl)anthranilate isomerase (217 aa).

This sequence belongs to the TrpF family.

It carries out the reaction N-(5-phospho-beta-D-ribosyl)anthranilate = 1-(2-carboxyphenylamino)-1-deoxy-D-ribulose 5-phosphate. It participates in amino-acid biosynthesis; L-tryptophan biosynthesis; L-tryptophan from chorismate: step 3/5. This chain is N-(5'-phosphoribosyl)anthranilate isomerase, found in Acaryochloris marina (strain MBIC 11017).